The primary structure comprises 255 residues: tRNA uridine(34) hydroxylase (255 aa).

Residues 125–219 (ATPDTILLDV…YLEQIPESES (95 aa)) form the Rhodanese domain. The Cysteine persulfide intermediate role is filled by Cys-179.

It belongs to the TrhO family.

It carries out the reaction uridine(34) in tRNA + AH2 + O2 = 5-hydroxyuridine(34) in tRNA + A + H2O. Its function is as follows. Catalyzes oxygen-dependent 5-hydroxyuridine (ho5U) modification at position 34 in tRNAs. The protein is tRNA uridine(34) hydroxylase of Nitrobacter winogradskyi (strain ATCC 25391 / DSM 10237 / CIP 104748 / NCIMB 11846 / Nb-255).